The chain runs to 429 residues: Small ribosomal subunit protein mS47 (429 aa).

Glu141, Gly166, Glu189, and Asp197 together coordinate substrate.

The protein belongs to the enoyl-CoA hydratase/isomerase family. Mitochondrion-specific ribosomal protein mS47 subfamily. Component of the mitochondrial small ribosomal subunit (mt-SSU). Mature yeast 74S mitochondrial ribosomes consist of a small (37S) and a large (54S) subunit. The 37S small subunit contains a 15S ribosomal RNA (15S mt-rRNA) and at least 32 different proteins. The 54S large subunit contains a 21S rRNA (21S mt-rRNA) and at least 45 different proteins. mS47/snr1 forms a protuberance of the yeast mitoribosome and retains a solvent-exposed cavity likely capable of accommodating a substrate, in accordance with it being an active enzyme as well as an integral constituent of the mitoribosome.

Its subcellular location is the mitochondrion. It catalyses the reaction 3-hydroxy-2-methylpropanoyl-CoA + H2O = 3-hydroxy-2-methylpropanoate + CoA + H(+). It participates in amino-acid degradation; L-valine degradation. Component of the mitochondrial ribosome (mitoribosome), a dedicated translation machinery responsible for the synthesis of mitochondrial genome-encoded proteins, including at least some of the essential transmembrane subunits of the mitochondrial respiratory chain. The mitoribosomes are attached to the mitochondrial inner membrane and translation products are cotranslationally integrated into the membrane. mS47/snr1 has enzymatic activity in vitro, and is able to catalyze the specific hydrolysis of 3-hydroxyisobutyryl-CoA (HIBYL-CoA). However, because the turnover rate of mS47/snr1 is only a fraction of that of the homologous mammalian enzyme, the physiological function of this activity remains unclear. Has an indirect role in endocytic membrane trafficking. The chain is Small ribosomal subunit protein mS47 (snr1) from Schizosaccharomyces pombe (strain 972 / ATCC 24843) (Fission yeast).